Here is a 610-residue protein sequence, read N- to C-terminus: Scarecrow-like protein 11 (610 aa).

Disordered regions lie at residues 32–54, 98–159, and 186–220; these read NNLF…PPTV, QQSP…RRNK, and QEEE…HKTN. 2 stretches are compositionally biased toward low complexity: residues 41 to 52 and 99 to 119; these read SQNQSSPNDSPP and QSPE…GDQD. Polar residues-rich tracts occupy residues 123-137 and 209-220; these read PSTT…SSGE and GSSNKSKTHKTN. The GRAS domain occupies 215–598; it reads KTHKTNTVDL…RVIYAFSCWK (384 aa). The interval 222–283 is leucine repeat I (LRI); that stretch reads VDLRSLLTQC…ARITGNISPP (62 aa). A VHIID region spans residues 302–367; the sequence is YKLFVHTCPI…GGPPMLRVTG (66 aa). The VHIID motif lies at 333 to 337; the sequence is LHIVD. The segment at 383 to 415 is leucine repeat II (LRII); that stretch reads ETGRRLKRFCDQFNVPFEFNFIAKKWETITLDE. Positions 424-520 are PFYRE; the sequence is TVVNCIHRLQ…RELLVRDAMS (97 aa). The SAW stretch occupies residues 523 to 598; the sequence is SCEGAERFAR…RVIYAFSCWK (76 aa).

The protein belongs to the GRAS family. As to expression, highly expressed in roots and at lower levels in leaves and sepals. Expressed in siliques.

It is found in the nucleus. In terms of biological role, probable transcription factor involved in plant development. The sequence is that of Scarecrow-like protein 11 (SCL11) from Arabidopsis thaliana (Mouse-ear cress).